The sequence spans 940 residues: BTB/POZ domain-containing protein FBL11 (940 aa).

The 69-residue stretch at 41–109 folds into the BTB domain; sequence WDMSEILSYG…LYGYDIEITS (69 aa). The BACK domain occupies 155-258; that stretch reads IQIWSFGLEH…FSLLPLWFIA (104 aa).

Its pathway is protein modification; protein ubiquitination. Its function is as follows. May act as a substrate-specific adapter of an E3 ubiquitin-protein ligase complex (CUL3-RBX1-BTB) which mediates the ubiquitination and subsequent proteasomal degradation of target proteins. The sequence is that of BTB/POZ domain-containing protein FBL11 (FBL11) from Arabidopsis thaliana (Mouse-ear cress).